The chain runs to 398 residues: Proteasome-activating nucleotidase (398 aa).

The stretch at Asp3–Ser60 forms a coiled coil. ATP-binding positions include Gly185–Leu190 and His324. The docks into pockets in the proteasome alpha-ring to cause gate opening stretch occupies residues Met396–Val398.

This sequence belongs to the AAA ATPase family. In terms of assembly, homohexamer. The hexameric complex has a two-ring architecture resembling a top hat that caps the 20S proteasome core at one or both ends. Upon ATP-binding, the C-terminus of PAN interacts with the alpha-rings of the proteasome core by binding to the intersubunit pockets.

It is found in the cytoplasm. Functionally, ATPase which is responsible for recognizing, binding, unfolding and translocation of substrate proteins into the archaeal 20S proteasome core particle. Is essential for opening the gate of the 20S proteasome via an interaction with its C-terminus, thereby allowing substrate entry and access to the site of proteolysis. Thus, the C-termini of the proteasomal ATPase function like a 'key in a lock' to induce gate opening and therefore regulate proteolysis. Unfolding activity requires energy from ATP hydrolysis, whereas ATP binding alone promotes ATPase-20S proteasome association which triggers gate opening, and supports translocation of unfolded substrates. This Archaeoglobus fulgidus (strain ATCC 49558 / DSM 4304 / JCM 9628 / NBRC 100126 / VC-16) protein is Proteasome-activating nucleotidase.